Here is a 151-residue protein sequence, read N- to C-terminus: MEYVLEVKNSPRHLLKQFTVCDVPLYDICDYNVSRDRCQELGCCFYEGVCYKKAVPIYIHVFSALIVIIAGAFVITIIYRVIQESRKEKAIPVDVALPQKSSEKAELASSSSKLGLKPASPGPPSAGPSMKSDEDKDDVTGTITEAEETED.

At 1 to 56 the chain is on the extracellular side; it reads MEYVLEVKNSPRHLLKQFTVCDVPLYDICDYNVSRDRCQELGCCFYEGVCYKKAVP. A helical membrane pass occupies residues 57 to 77; sequence IYIHVFSALIVIIAGAFVITI. Topologically, residues 78-151 are cytoplasmic; it reads IYRVIQESRK…TITEAEETED (74 aa). Residues 100 to 151 form a disordered region; the sequence is KSSEKAELASSSSKLGLKPASPGPPSAGPSMKSDEDKDDVTGTITEAEETED. Positions 107–119 are enriched in low complexity; that stretch reads LASSSSKLGLKPA.

Its subcellular location is the membrane. In Homo sapiens (Human), this protein is Testis-expressed protein 29 (TEX29).